Consider the following 505-residue polypeptide: MSKQDGKLTGLFGAPVSDRENSMTAGPRGPLLMQDIYFLEQMSHFDREVIPERRMHAKGSGAFGTFTVTNDITQYTSAKMFSEVGKQTEMFARFSTVSGERGAADAERDIRGFALKFYTEDGNWDLVGNNTPVFFFRDPKLFVSLNRAVKRDPRTNMRSAQNNWDFWTGLPEALHQVTILMSDRGIPKDLRHMHGFGSHTYSMYNDKGERVWVKYHFRTQQGIENLTDEEAANVIATDRDSSQRDLFNAIENGDYPKWKMYIQVMTEEQARNHKDNPFDLTKVWYHGDYPLIEVGEFELNRNPNNYFQDVEQAAFAPTNIVPGLDYSPDKMLQGRLFPYGDAQRYRLGVNHWQIPVNQPKGVGIENLCPFSRDGQMRILDDNQGGGPHYYPNNQGVYDSQPEFKKPPFPADGDGYEYNQRQDDDNYFEQPGKLFRLQSDEAKERIFTNTANAMDGVTEDVKRRHIRHCYKADPDYGKGVAKALGIDINSIDLEGEQDETYENFKN.

A disordered region spans residues 1–25; the sequence is MSKQDGKLTGLFGAPVSDRENSMTA. Residues His-56 and Asn-129 contribute to the active site. Tyr-339 is a heme binding site.

The protein belongs to the catalase family. In terms of assembly, homodimer. Heme is required as a cofactor.

It catalyses the reaction 2 H2O2 = O2 + 2 H2O. Decomposes hydrogen peroxide into water and oxygen; serves to protect cells from the toxic effects of hydrogen peroxide. The sequence is that of Catalase (katA) from Staphylococcus warneri.